We begin with the raw amino-acid sequence, 250 residues long: Probable aquaporin TIP1-1 (250 aa).

2 helical membrane-spanning segments follow: residues 25-44 (AEFISTLIFVFAGQGSGMAF) and 58-77 (LIAAAVAHAFALFVAVSVGA). The NPA 1 signature appears at 85–87 (NPA). The next 3 membrane-spanning stretches (helical) occupy residues 103-121 (GLLYWIAQLLGSTVACFLL), 144-163 (LVLEIVMTFGLVYTVYATAV), and 170-192 (LGTIAPIAIGFIVGANILVGGAF). The NPA 2 motif lies at 198 to 200 (NPA). A helical transmembrane segment spans residues 216 to 233 (WVYWVGPLIGGGLAGVIY).

It belongs to the MIP/aquaporin (TC 1.A.8) family. TIP (TC 1.A.8.10) subfamily. In terms of tissue distribution, expressed in roots and leaves.

Its subcellular location is the vacuole membrane. Aquaporins facilitate the transport of water and small neutral solutes across cell membranes. May be involved in transport from the vacuolar compartment to the cytoplasm. The protein is Probable aquaporin TIP1-1 (TIP1-1) of Oryza sativa subsp. japonica (Rice).